Consider the following 284-residue polypeptide: NH(3)-dependent NAD(+) synthetase (284 aa).

41 to 48 (GLSGGVDS) provides a ligand contact to ATP. Asp-47 serves as a coordination point for Mg(2+). Arg-127 is a deamido-NAD(+) binding site. Thr-147 contributes to the ATP binding site. Glu-152 provides a ligand contact to Mg(2+). Position 167 (Asp-167) interacts with deamido-NAD(+). Lys-176 and Ser-199 together coordinate ATP. Positions 264–284 (FKRRPAPGLDLPEPEDPAMSG) are disordered. Residues 275-284 (PEPEDPAMSG) show a composition bias toward acidic residues.

Belongs to the NAD synthetase family. In terms of assembly, homodimer.

It catalyses the reaction deamido-NAD(+) + NH4(+) + ATP = AMP + diphosphate + NAD(+) + H(+). Its pathway is cofactor biosynthesis; NAD(+) biosynthesis; NAD(+) from deamido-NAD(+) (ammonia route): step 1/1. In terms of biological role, catalyzes the ATP-dependent amidation of deamido-NAD to form NAD. Uses ammonia as a nitrogen source. The protein is NH(3)-dependent NAD(+) synthetase of Methanopyrus kandleri (strain AV19 / DSM 6324 / JCM 9639 / NBRC 100938).